A 325-amino-acid polypeptide reads, in one-letter code: Glycerol-3-phosphate dehydrogenase [NAD(P)+] (325 aa).

NADPH-binding residues include Trp-11, Arg-30, and Lys-103. The sn-glycerol 3-phosphate site is built by Lys-103, Gly-131, and Ser-133. Ala-135 contributes to the NADPH binding site. Residues Lys-186, Asp-242, Ser-252, Arg-253, and Asn-254 each coordinate sn-glycerol 3-phosphate. Lys-186 (proton acceptor) is an active-site residue. Arg-253 lines the NADPH pocket. Residues Val-279 and Glu-281 each contribute to the NADPH site.

The protein belongs to the NAD-dependent glycerol-3-phosphate dehydrogenase family.

The protein localises to the cytoplasm. It carries out the reaction sn-glycerol 3-phosphate + NAD(+) = dihydroxyacetone phosphate + NADH + H(+). The catalysed reaction is sn-glycerol 3-phosphate + NADP(+) = dihydroxyacetone phosphate + NADPH + H(+). It functions in the pathway membrane lipid metabolism; glycerophospholipid metabolism. Its function is as follows. Catalyzes the reduction of the glycolytic intermediate dihydroxyacetone phosphate (DHAP) to sn-glycerol 3-phosphate (G3P), the key precursor for phospholipid synthesis. The polypeptide is Glycerol-3-phosphate dehydrogenase [NAD(P)+] (Wolbachia pipientis subsp. Culex pipiens (strain wPip)).